The primary structure comprises 436 residues: MKGFMIAAPASGSGKTTVTLGLLRALKRRGEVLAPVKAGPDYIDPAYHRAASGVDCFNLDPWAMRPGLISALSSRMTESGARVLVAEGMMGLFDGAIDGKGSSADLARLLDLPVVLVVDCARQSHSIAALVWGFSQFRKDVLIEGVILNRVGSPRHEAMLRGALAPLGVPVLGALPRDPALSLPERHLGLVQADEHAGLESFLEQAADVMEAHIDMDALQTIWLRPKRYDAMANVARLKPLGNRIAVARDDAFAFAYMHLFEGWRRRGAEISFFSPLADEAPKADADAIYLPGGYPELHAQRLAGASRFRTAIGDAAARGVTVYGECGGYMVLGKTLEDAAGVHHPMLGLLPLETSFARRKLHLGYRLLEPLGGLPWDMPLKAHEFHYASIVREEKADRLFRVRDASGENLGEAGLRVGSVSGSFMHVIDFSGEAA.

Positions 244–435 constitute a GATase cobBQ-type domain; that stretch reads RIAVARDDAF…MHVIDFSGEA (192 aa). The active-site Nucleophile is the C327.

The protein belongs to the CobB/CbiA family. Requires Mg(2+) as cofactor.

The catalysed reaction is hydrogenobyrinate + 2 L-glutamine + 2 ATP + 2 H2O = hydrogenobyrinate a,c-diamide + 2 L-glutamate + 2 ADP + 2 phosphate + 2 H(+). Its pathway is cofactor biosynthesis; adenosylcobalamin biosynthesis; cob(II)yrinate a,c-diamide from precorrin-2 (aerobic route): step 9/10. In terms of biological role, catalyzes the ATP-dependent amidation of the two carboxylate groups at positions a and c of hydrogenobyrinate, using either L-glutamine or ammonia as the nitrogen source. The protein is Hydrogenobyrinate a,c-diamide synthase of Brucella suis biovar 1 (strain 1330).